The sequence spans 488 residues: 1-deoxy-D-xylulose 5-phosphate reductoisomerase, apicoplastic (488 aa).

Residues 1 to 72 (MKKYIYIYFF…LCKKDLIDIG (72 aa)) constitute an apicoplast transit peptide. Residues 86–89 (TGSI) and 115–117 (NKS) contribute to the NADP(+) site. K205 is a binding site for 1-deoxy-D-xylulose 5-phosphate. Residue E206 participates in NADP(+) binding. D231 is a Mn(2+) binding site. S232, E233, S270, and H293 together coordinate 1-deoxy-D-xylulose 5-phosphate. Residue E233 participates in Mn(2+) binding. G299 provides a ligand contact to NADP(+). Positions 306, 311, 312, and 315 each coordinate 1-deoxy-D-xylulose 5-phosphate. E315 contributes to the Mn(2+) binding site.

This sequence belongs to the DXR family. In terms of assembly, homodimer. Mg(2+) is required as a cofactor. The cofactor is Mn(2+).

The protein localises to the plastid. Its subcellular location is the apicoplast. The enzyme catalyses 2-C-methyl-D-erythritol 4-phosphate + NADP(+) = 1-deoxy-D-xylulose 5-phosphate + NADPH + H(+). The protein operates within isoprenoid biosynthesis; isopentenyl diphosphate biosynthesis via DXP pathway; isopentenyl diphosphate from 1-deoxy-D-xylulose 5-phosphate: step 1/6. With respect to regulation, inhibited by fosmidomycin and its derivatives. Its function is as follows. Catalyzes the NADPH-dependent rearrangement and reduction of 1-deoxy-D-xylulose-5-phosphate (DXP) to 2-C-methyl-D-erythritol 4-phosphate (MEP). This Plasmodium falciparum (isolate 3D7) protein is 1-deoxy-D-xylulose 5-phosphate reductoisomerase, apicoplastic (DXR).